A 190-amino-acid chain; its full sequence is Potassium-transporting ATPase KdpC subunit (190 aa).

The helical transmembrane segment at 10-30 (TFLFLLLITGGVYPLLTTALG) threads the bilayer.

It belongs to the KdpC family. In terms of assembly, the system is composed of three essential subunits: KdpA, KdpB and KdpC.

Its subcellular location is the cell inner membrane. In terms of biological role, part of the high-affinity ATP-driven potassium transport (or Kdp) system, which catalyzes the hydrolysis of ATP coupled with the electrogenic transport of potassium into the cytoplasm. This subunit acts as a catalytic chaperone that increases the ATP-binding affinity of the ATP-hydrolyzing subunit KdpB by the formation of a transient KdpB/KdpC/ATP ternary complex. The protein is Potassium-transporting ATPase KdpC subunit of Escherichia coli (strain SMS-3-5 / SECEC).